A 521-amino-acid polypeptide reads, in one-letter code: Lysine--tRNA ligase (521 aa).

The 'HIGH' region signature appears at 32–40; the sequence is PSGTVHIGN. The 'KMSKS' region signature appears at 280–284; sequence KISSS.

This sequence belongs to the class-I aminoacyl-tRNA synthetase family.

The protein resides in the cytoplasm. The catalysed reaction is tRNA(Lys) + L-lysine + ATP = L-lysyl-tRNA(Lys) + AMP + diphosphate. The sequence is that of Lysine--tRNA ligase from Borrelia garinii subsp. bavariensis (strain ATCC BAA-2496 / DSM 23469 / PBi) (Borreliella bavariensis).